A 141-amino-acid polypeptide reads, in one-letter code: Hemoglobin subunit alpha-2 (141 aa).

A Globin domain is found at 1-141; the sequence is VLSEGNKKII…VTYQLSSLYR (141 aa). Histidine 59 contacts O2. A heme b-binding site is contributed by histidine 88.

The protein belongs to the globin family. Heterotetramer of two alpha chains and two beta chains. Red blood cells.

In terms of biological role, involved in oxygen transport from the lung to the various peripheral tissues. In Torpedo marmorata (Marbled electric ray), this protein is Hemoglobin subunit alpha-2.